The primary structure comprises 282 residues: Probable aquaporin PIP2-6 (282 aa).

Helical transmembrane passes span 39–59 (ALIA…ATVI) and 76–96 (LGIA…TAGI). Positions 102 to 104 (NPA) match the NPA 1 motif. The next 3 helical transmembrane spans lie at 121 to 141 (VMYI…VKGI), 163 to 183 (GTAL…VFSA), and 197 to 217 (VLAP…TIPI). Residues 223–225 (NPA) carry the NPA 2 motif. A helical membrane pass occupies residues 245–265 (IFWAGPFIGALAAAAYHQYIL).

This sequence belongs to the MIP/aquaporin (TC 1.A.8) family. PIP (TC 1.A.8.11) subfamily. In terms of tissue distribution, expressed in roots and leaves.

It is found in the cell membrane. In terms of biological role, aquaporins facilitate the transport of water and small neutral solutes across cell membranes. This chain is Probable aquaporin PIP2-6 (PIP2-6), found in Oryza sativa subsp. japonica (Rice).